We begin with the raw amino-acid sequence, 422 residues long: MRLSKYYLPTLKEKPAHAKIISHQYSLRAGLIKQIASGIYTWLPLGLLVLKNIEDIIRDEMNKSGAIEALMPCVQPASLWRESGRYDDYGKEMLRIKDRHEEDMLFGPTHEEIATDLIRDVVKSYKDLPLCLYQIQWKFRDEVRPRYGVMRGREFLMKDAYSFDVDYEGALNSYNLMYKTYIKIFKRMGFTPIGVGADTGPIGGNLSHEFHILANTGESTLYYDNKFSELLESEDIESLKSIYAVADDMHDPETCPISQEQLNVSKGIEIGHIFYFGDKYSKPMKASVTSQDGKNVNIHMGSYGIGVSRLVGAIIEAFHDDKGIIWPEEVAPFRIGLINLQTKVTEAADKIYKALKSDEVLYDDTEGSVGVKFSRMDLIGLPWQIIVGKKAVSENIVEVKNRATGEVKEMQIEEAINHFSAK.

The protein belongs to the class-II aminoacyl-tRNA synthetase family. ProS type 2 subfamily. Homodimer.

Its subcellular location is the cytoplasm. It catalyses the reaction tRNA(Pro) + L-proline + ATP = L-prolyl-tRNA(Pro) + AMP + diphosphate. Its function is as follows. Catalyzes the attachment of proline to tRNA(Pro) in a two-step reaction: proline is first activated by ATP to form Pro-AMP and then transferred to the acceptor end of tRNA(Pro). In Wolbachia pipientis wMel, this protein is Proline--tRNA ligase.